Reading from the N-terminus, the 218-residue chain is Ribose-5-phosphate isomerase A (218 aa).

Residues 28–31, 81–84, and 94–97 each bind substrate; these read TGST, DGAD, and KGGG. The active-site Proton acceptor is E103. K121 is a binding site for substrate.

Belongs to the ribose 5-phosphate isomerase family. As to quaternary structure, homodimer.

The enzyme catalyses aldehydo-D-ribose 5-phosphate = D-ribulose 5-phosphate. The protein operates within carbohydrate degradation; pentose phosphate pathway; D-ribose 5-phosphate from D-ribulose 5-phosphate (non-oxidative stage): step 1/1. Functionally, catalyzes the reversible conversion of ribose-5-phosphate to ribulose 5-phosphate. This Sodalis glossinidius (strain morsitans) protein is Ribose-5-phosphate isomerase A.